A 672-amino-acid chain; its full sequence is Glycine--tRNA ligase beta subunit (672 aa).

Belongs to the class-II aminoacyl-tRNA synthetase family. In terms of assembly, tetramer of two alpha and two beta subunits.

It localises to the cytoplasm. It catalyses the reaction tRNA(Gly) + glycine + ATP = glycyl-tRNA(Gly) + AMP + diphosphate. This chain is Glycine--tRNA ligase beta subunit (glyS), found in Thermotoga maritima (strain ATCC 43589 / DSM 3109 / JCM 10099 / NBRC 100826 / MSB8).